The following is a 96-amino-acid chain: (4S)-4-hydroxy-5-phosphonooxypentane-2,3-dione isomerase (96 aa).

Residues 2–91 enclose the ABM domain; the sequence is HVTLVEINVH…MTGPRKKRLF (90 aa).

This sequence belongs to the LsrG family. In terms of assembly, homodimer.

The protein resides in the cytoplasm. It carries out the reaction (2S)-2-hydroxy-3,4-dioxopentyl phosphate = 3-hydroxy-2,4-dioxopentyl phosphate. Involved in the degradation of phospho-AI-2, thereby terminating induction of the lsr operon and closing the AI-2 signaling cycle. Catalyzes the conversion of (4S)-4-hydroxy-5-phosphonooxypentane-2,3-dione (P-DPD) to 3-hydroxy-5-phosphonooxypentane-2,4-dione (P-HPD). The chain is (4S)-4-hydroxy-5-phosphonooxypentane-2,3-dione isomerase from Shigella flexneri serotype 5b (strain 8401).